The primary structure comprises 1572 residues: Dynein axonemal assembly factor 8 (1572 aa).

Disordered stretches follow at residues 1–21 (MASE…NWSG), 262–304 (SEEV…HPQS), 324–428 (SLEQ…EILQ), and 849–871 (FQNP…SDSE). Residues 324–335 (SLEQNPENPSQR) show a composition bias toward polar residues. The span at 336 to 351 (NEQKEKHHLNKTDHTG) shows a compositional bias: basic and acidic residues. The segment covering 361 to 374 (NIQNDSLSDANMSN) has biased composition (polar residues). Residues 409–426 (VGREEKDGREEQEKEKEI) are compositionally biased toward basic and acidic residues. The span at 849 to 865 (FQNPYSRSTQPRSANLR) shows a compositional bias: polar residues. The NDK stretch occupies residues 1249-1382 (TVLLLKPRIW…IRDIKTFFPE (134 aa)).

In terms of assembly, interacts with DNAI2. Expression is enriched in multiciliated cells in the epidermis and the nephrostomes of the pronephros.

It is found in the dynein axonemal particle. The protein localises to the cytoplasm. In terms of biological role, in cyliated cells, dynein axonemal particle-specific protein required for deployment of ODA to the axoneme. Interacts with outer dynein arm (ODA) subunits. The sequence is that of Dynein axonemal assembly factor 8 (dnaaf8) from Xenopus laevis (African clawed frog).